Consider the following 116-residue polypeptide: Endoribonuclease toxin ChpB (116 aa).

This sequence belongs to the PemK/MazF family. As to quaternary structure, homodimer, interacts with ChpS, which inhibits the endoribonuclease activity.

Its activity is regulated as follows. Stimulated in vitro in a concentration-dependent fashion by extracellular death factor (EDF, a quorum sensing pentapeptide sequence NNWNN, probably produced from the zwf gene product glucose-6-phosphate 1-dehydrogenase), which is able to overcome inhibition by cognate antitoxin ChpS. Functionally, toxic component of a type II toxin-antitoxin (TA) system. ChpB is a sequence-specific mRNA and (weak) tmRNA endoribonuclease that inhibits protein synthesis and induces bacterial stasis. Cleavage is independent of the ribosome. Cleavage occurs at ACY sequences where Y is not C. The endoribonuclease activity is not as strong as that of MazF. The endoribonuclease activity (a toxin) is inhibited by its labile cognate antitoxin ChpS. Toxicity results when the levels of ChpS decrease in the cell, leading to mRNA degradation. Both ChpS and ChpB probably bind to the promoter region of the chpS-chpB operon to autoregulate their synthesis. This Escherichia coli (strain K12) protein is Endoribonuclease toxin ChpB (chpB).